The sequence spans 349 residues: Nitrilase, bromoxynil-specific (349 aa).

Residues 5–274 (FKAAAVQAEP…EGIVYAEIDL (270 aa)) enclose the CN hydrolase domain. Glutamate 45 functions as the Proton acceptor in the catalytic mechanism. Residue lysine 127 is the Proton donor of the active site. Cysteine 161 functions as the Nucleophile in the catalytic mechanism.

Belongs to the carbon-nitrogen hydrolase superfamily. Nitrilase family. As to quaternary structure, homodimer.

The enzyme catalyses a nitrile + 2 H2O = a carboxylate + NH4(+). Specific for the herbicide bromoxynil (3,5-dibromo-4-hydroxybenzonitrile); converts it to its metabolite 3,5-dibromo-4-hydroxybenzoic acid. This is Nitrilase, bromoxynil-specific (bxn) from Klebsiella pneumoniae subsp. ozaenae.